The chain runs to 73 residues: Beta-defensin 108B (73 aa).

The signal sequence occupies residues 1–22 (MRIAVLLFAIFFFMSQVLPARG). 3 disulfide bridges follow: cysteine 28-cysteine 55, cysteine 35-cysteine 49, and cysteine 39-cysteine 56.

Belongs to the beta-defensin family. Specifically expressed in testis. Low expression is detected also in liver.

The protein resides in the secreted. Its function is as follows. Has antibacterial activity. The polypeptide is Beta-defensin 108B (DEFB108B) (Homo sapiens (Human)).